A 290-amino-acid polypeptide reads, in one-letter code: Flap endonuclease Xni (290 aa).

Mg(2+) is bound at residue aspartate 125. One can recognise a 5'-3' exonuclease domain in the interval 181–275 (VKTSQLIDFW…DIRLTTSSSA (95 aa)). K(+) is bound by residues leucine 192, valine 203, and isoleucine 206. Residues 205 to 210 (GIGQVT) are interaction with DNA.

It belongs to the Xni family. It depends on Mg(2+) as a cofactor. K(+) is required as a cofactor.

Has flap endonuclease activity. During DNA replication, flap endonucleases cleave the 5'-overhanging flap structure that is generated by displacement synthesis when DNA polymerase encounters the 5'-end of a downstream Okazaki fragment. The protein is Flap endonuclease Xni of Colwellia psychrerythraea (strain 34H / ATCC BAA-681) (Vibrio psychroerythus).